The sequence spans 387 residues: Flap endonuclease 1 (387 aa).

Residues 1–104 (MGIKGLSQLI…GELEKRKERQ (104 aa)) are N-domain. Asp34 is a binding site for Mg(2+). Arg70 contacts DNA. Mg(2+)-binding residues include Asp86, Glu158, Glu160, Asp179, and Asp181. The I-domain stretch occupies residues 122-253 (KMVMWNKRTT…KKALAMIKKY (132 aa)). Glu158 serves as a coordination point for DNA. Positions 231 and 233 each coordinate DNA. Residue Asp233 participates in Mg(2+) binding. The disordered stretch occupies residues 332–387 (SSRGKPTQTRLDGFFTPVASSSTTKKKAPAKKDDKKSATDKKRKAADASTSSKKKK). The interval 338–346 (TQTRLDGFF) is interaction with PCNA. Basic and acidic residues predominate over residues 361–371 (AKKDDKKSATD). Over residues 378–387 (DASTSSKKKK) the composition is skewed to low complexity.

The protein belongs to the XPG/RAD2 endonuclease family. FEN1 subfamily. Interacts with PCNA. Three molecules of FEN1 bind to one PCNA trimer with each molecule binding to one PCNA monomer. PCNA stimulates the nuclease activity without altering cleavage specificity. It depends on Mg(2+) as a cofactor. Post-translationally, phosphorylated. Phosphorylation upon DNA damage induces relocalization to the nuclear plasma.

Its subcellular location is the nucleus. The protein localises to the nucleolus. The protein resides in the nucleoplasm. It localises to the mitochondrion. In terms of biological role, structure-specific nuclease with 5'-flap endonuclease and 5'-3' exonuclease activities involved in DNA replication and repair. During DNA replication, cleaves the 5'-overhanging flap structure that is generated by displacement synthesis when DNA polymerase encounters the 5'-end of a downstream Okazaki fragment. It enters the flap from the 5'-end and then tracks to cleave the flap base, leaving a nick for ligation. Also involved in the long patch base excision repair (LP-BER) pathway, by cleaving within the apurinic/apyrimidinic (AP) site-terminated flap. Acts as a genome stabilization factor that prevents flaps from equilibrating into structures that lead to duplications and deletions. Also possesses 5'-3' exonuclease activity on nicked or gapped double-stranded DNA, and exhibits RNase H activity. Also involved in replication and repair of rDNA and in repairing mitochondrial DNA. In Naegleria gruberi (Amoeba), this protein is Flap endonuclease 1.